A 107-amino-acid polypeptide reads, in one-letter code: U1-lycotoxin-Ls1d (107 aa).

The signal sequence occupies residues 1-20; it reads MMKVLVVVALLVTLISYSSS. A propeptide spanning residues 21–41 is cleaved from the precursor; it reads EGIDDLEADELLSLMANEQTR. Cystine bridges form between cysteine 44-cysteine 59, cysteine 51-cysteine 68, cysteine 58-cysteine 86, and cysteine 70-cysteine 84.

Belongs to the neurotoxin 19 (CSTX) family. 04 (U1-Lctx) subfamily. As to expression, expressed by the venom gland.

Its subcellular location is the secreted. This Lycosa singoriensis (Wolf spider) protein is U1-lycotoxin-Ls1d.